Reading from the N-terminus, the 819-residue chain is Eukaryotic translation initiation factor 3 subunit C (819 aa).

The disordered stretch occupies residues 1-106 (MSRFFLKTYE…DSSDEEDGKK (106 aa)). Acidic residues-rich tracts occupy residues 17-41 (GEEE…ELSD) and 47-59 (DSDE…EDND). The PCI domain occupies 620 to 795 (FHQHINLDLI…EYIIFERGEE (176 aa)).

This sequence belongs to the eIF-3 subunit C family. In terms of assembly, component of the eukaryotic translation initiation factor 3 (eIF-3) complex.

The protein localises to the cytoplasm. Its function is as follows. Component of the eukaryotic translation initiation factor 3 (eIF-3) complex, which is involved in protein synthesis of a specialized repertoire of mRNAs and, together with other initiation factors, stimulates binding of mRNA and methionyl-tRNAi to the 40S ribosome. The eIF-3 complex specifically targets and initiates translation of a subset of mRNAs involved in cell proliferation. This Kluyveromyces lactis (strain ATCC 8585 / CBS 2359 / DSM 70799 / NBRC 1267 / NRRL Y-1140 / WM37) (Yeast) protein is Eukaryotic translation initiation factor 3 subunit C.